The primary structure comprises 206 residues: Sclerostin domain-containing protein 1 (206 aa).

Residues 1–23 form the signal peptide; it reads MLPPAIHFYLLPLACILMKSCLA. An N-linked (GlcNAc...) asparagine glycan is attached at Asn-47. 4 cysteine pairs are disulfide-bonded: Cys-75–Cys-133, Cys-89–Cys-147, Cys-100–Cys-163, and Cys-104–Cys-165. Residues 75 to 170 enclose the CTCK domain; the sequence is CRELRSTKYI…TACKCKRYTR (96 aa). N-linked (GlcNAc...) asparagine glycosylation is present at Asn-173. Positions 174 to 206 are disordered; sequence ESSHNFESMSPAKPVQHHRERKRASKSSKHSMS. A compositionally biased stretch (basic residues) spans 188 to 206; that stretch reads VQHHRERKRASKSSKHSMS.

The protein belongs to the sclerostin family. Interacts with BMP2, BMP4, BMP6 and BMP7 with high affinity. In terms of tissue distribution, highly expressed in kidney and weakly in lung.

The protein resides in the secreted. Functionally, may be involved in the onset of endometrial receptivity for implantation/sensitization for the decidual cell reaction Enhances Wnt signaling and inhibits TGF-beta signaling. Directly antagonizes activity of BMP2, BMP4, BMP6 and BMP7 in a dose-dependent manner. In Homo sapiens (Human), this protein is Sclerostin domain-containing protein 1 (SOSTDC1).